Here is a 390-residue protein sequence, read N- to C-terminus: Curcumin synthase 3 (390 aa).

C164 is an active-site residue.

Belongs to the thiolase-like superfamily. Chalcone/stilbene synthases family. Homodimer.

The catalysed reaction is (E)-feruloylacetyl-CoA + (E)-feruloyl-CoA + H2O = curcumin + CO2 + 2 CoA. It carries out the reaction (E)-feruloylacetyl-CoA + (E)-4-coumaroyl-CoA + H2O = demethoxycurcumin + CO2 + 2 CoA. It catalyses the reaction (4-coumaroyl)acetyl-CoA + 4-coumaroyl-CoA + H2O = bisdemethoxycurcumin + CO2 + 2 CoA. It participates in secondary metabolite biosynthesis; flavonoid biosynthesis. Functionally, catalyzes the synthesis of curcumin by condensing feruloyl-CoA with a diketide-CoA in the curcuminoid biosynthesis. Also acts as a demethoxycurcumin synthase by accepting 4-coumaroyl-CoA as a starter substrate instead of feruloyl-CoA. In Curcuma longa (Turmeric), this protein is Curcumin synthase 3 (CURS3).